A 439-amino-acid chain; its full sequence is MATDALYNEVAEIIRCVLAKEKSVRNAVYGSSYKNKKALLRLSCESLKFRPVFDEILQDKELKSMKRDANIGGSVELLYVLMYETLVGSGLTRCSQELKSVISRRIQRIKEVEHAMQDEGRGIKAMKEADDGMKKIQIPRYARINTLKWTADEAMKTLETEKWKILGTLKPENFAEMVTKMKDDEVYVDPHVENLIIFAPNIQNFYEYWMVEQRYLILQDKASCLPAFLLNPRPGSQVFDTCAAPGMKTSHAAAIMENQGKVWAMDRAADRVATMKQLLDASKVAIASSFCGDFLKTDVTDKKFSKVKFAIVDPPCSGSGIVKRMDEITGGNAEKERLEKLKNLQAMILKHALKLPGLKRAVYSTCSVHEEENEQVVDEVLLDTYVRQNYVLKKNVLPEWTYRGLKTYEVGEHCLRANPKVTLTNGFFVAVFERVKSSE.

Residues D266, D293, and D313 each contribute to the S-adenosyl-L-methionine site. C366 (nucleophile) is an active-site residue.

It belongs to the class I-like SAM-binding methyltransferase superfamily. RsmB/NOP family.

It carries out the reaction a cytidine in 26S rRNA + S-adenosyl-L-methionine = a 5-methylcytidine in 26S rRNA + S-adenosyl-L-homocysteine + H(+). Its function is as follows. S-adenosyl-L-methionine-dependent methyltransferase which methylates the carbon-5 position of cytosine 2381 to 5-methylcytosine (m5C2381) in 26S rRNA. Plays a role in the production of mature 5S, 5.8S, 18S and 26S rRNAs and promotes the processing of the internally transcribed spacer 2 (ITS2), which separates the 5.8S and 26S rRNAs on large pre-rRNA precursors. May play a role in the translation of leucine and proline codons. May play a role in maintaining ribosomal frameshifting in response to osmotic stress. Not required for global translation. This chain is 26S rRNA (cytosine-C(5))-methyltransferase nsun-5, found in Caenorhabditis elegans.